The sequence spans 296 residues: Pantothenate synthetase (296 aa).

37 to 44 (MGALHTGH) is an ATP binding site. Catalysis depends on H44, which acts as the Proton donor. Residue Q68 coordinates (R)-pantoate. Q68 provides a ligand contact to beta-alanine. Residue 160-163 (GQKD) coordinates ATP. Position 166 (Q166) interacts with (R)-pantoate. ATP contacts are provided by residues V189 and 197–200 (TSSR).

The protein belongs to the pantothenate synthetase family. As to quaternary structure, homodimer.

Its subcellular location is the cytoplasm. The catalysed reaction is (R)-pantoate + beta-alanine + ATP = (R)-pantothenate + AMP + diphosphate + H(+). Its pathway is cofactor biosynthesis; (R)-pantothenate biosynthesis; (R)-pantothenate from (R)-pantoate and beta-alanine: step 1/1. Catalyzes the condensation of pantoate with beta-alanine in an ATP-dependent reaction via a pantoyl-adenylate intermediate. The sequence is that of Pantothenate synthetase from Thermobifida fusca (strain YX).